The following is a 227-amino-acid chain: Transmembrane emp24 domain-containing protein 1 (227 aa).

The signal sequence occupies residues 1–23; sequence MMAAGAALALALWLLMPPVGVGG. Residues 24–194 are Extracellular-facing; sequence AGPPPIQDGE…LQEGNLERVN (171 aa). The 83-residue stretch at 43–125 folds into the GOLD domain; it reads KQCFYQSAPA…EKLVFFELIF (83 aa). Residues 145–170 adopt a coiled-coil conformation; the sequence is EMLDVKMEDIKESIETMRTRLERSIQ. Residues 195-215 form a helical membrane-spanning segment; the sequence is FWSAVNVAVLLLVAVLQVCTL. The Cytoplasmic portion of the chain corresponds to 216 to 227; the sequence is KRFFQDKRPVPT. Residues 218-219 carry the COPII vesicle coat-binding motif; it reads FF. A COPI vesicle coat-binding motif is present at residues 218–227; sequence FFQDKRPVPT.

It belongs to the EMP24/GP25L family. In terms of assembly, homodimer in endoplasmic reticulum, endoplasmic reticulum-Golgi intermediate compartment and cis-Golgi network. Interacts with IL1RL1. Interacts with RNF26; this interaction is important to modulate innate immune signaling through the cGAS-STING pathway.

It localises to the cell membrane. The protein localises to the endoplasmic reticulum membrane. It is found in the golgi apparatus. Its subcellular location is the cis-Golgi network membrane. The protein resides in the endoplasmic reticulum-Golgi intermediate compartment membrane. Potential role in vesicular protein trafficking, mainly in the early secretory pathway. May act as a cargo receptor at the lumenal side for incorporation of secretory cargo molecules into transport vesicles and may be involved in vesicle coat formation at the cytoplasmic side. Plays a positive role in IL-33-mediated IL-8 and IL-6 production by interacting with interleukin-33 receptor IL1RL1. Plays also a role in the modulation of innate immune signaling through the cGAS-STING pathway by interacting with RNF26. In Pongo abelii (Sumatran orangutan), this protein is Transmembrane emp24 domain-containing protein 1 (TMED1).